The following is a 247-amino-acid chain: MIFNPLEQFRISVLQKLFFGNIDISITNNTIILFVILIGFTFLFYVNYSTNTYIPSKWQYAVENIYLFVLQLFKQQINNIVALKYFPLVLFVFSFILFANLIGLLPYGFTITGHIIFTFQIAFSLFFGITLINFFNNKTEFFNLFVPSGVPKPLIPFLVVIEVVSYLIRPFSLSVRLFANMLAGHTLLNILSAFIFNVFKKYALISFLPLLFIVFIIVLEFCIAIVQAYIFSILTCIYLNDIYNTSH.

Helical transmembrane passes span 26–46 (ITNN…LFYV), 85–105 (YFPL…IGLL), 115–135 (IIFT…INFF), 141–161 (FFNL…LVVI), 178–198 (FANM…IFNV), and 205–225 (ISFL…CIAI).

The protein belongs to the ATPase A chain family. In terms of assembly, F-type ATPases have 2 components, CF(1) - the catalytic core - and CF(0) - the membrane proton channel. CF(1) has five subunits: alpha(3), beta(3), gamma(1), delta(1), epsilon(1). CF(0) has three main subunits: a, b and c.

The protein localises to the mitochondrion inner membrane. Mitochondrial membrane ATP synthase (F(1)F(0) ATP synthase or Complex V) produces ATP from ADP in the presence of a proton gradient across the membrane which is generated by electron transport complexes of the respiratory chain. F-type ATPases consist of two structural domains, F(1) - containing the extramembraneous catalytic core and F(0) - containing the membrane proton channel, linked together by a central stalk and a peripheral stalk. During catalysis, ATP synthesis in the catalytic domain of F(1) is coupled via a rotary mechanism of the central stalk subunits to proton translocation. Key component of the proton channel; it may play a direct role in the translocation of protons across the membrane. The protein is ATP synthase subunit a (ATP6) of Acanthamoeba castellanii (Amoeba).